Reading from the N-terminus, the 101-residue chain is uncharacterized protein (101 aa).

This is an uncharacterized protein from Encephalitozoon cuniculi (strain GB-M1) (Microsporidian parasite).